The primary structure comprises 285 residues: MPAATVDHSQRICEVWACNLDEEMKKIRQVIRKYNYVAMDTEFPGVVARPIGEFRSNADYQYQLLRCNVDLLKIIQLGLTFMNEQGEYPPGTSTWQFNFKFNLTEDMYAQDSIELLTTSGIQFKKHEEEGIETQYFAELLMTSGVVLCEGVKWLSFHSGYDFGYLIKILTNSNLPEEELDFFEILRLFFPVIYDVKYLMKSCKNLKGGLQEVAEQLELERIGPQHQAGSDSLLTGMAFFKMREMFFEDHIDDAKYCGHLYGLGSGSSYVQNGTGNAYEEEANKQS.

The a divalent metal cation site is built by Asp40, Glu42, Asp161, Asp230, and Glu278.

This sequence belongs to the CAF1 family. Component of the CCR4-NOT complex. Mn(2+) serves as cofactor. It depends on Mg(2+) as a cofactor. Requires Co(2+) as cofactor.

It localises to the nucleus. The protein resides in the cytoplasm. It catalyses the reaction Exonucleolytic cleavage of poly(A) to 5'-AMP.. In terms of biological role, has 3'-5' poly(A) exoribonuclease activity for synthetic poly(A) RNA substrate. Catalytic component of the CCR4-NOT complex which is one of the major cellular mRNA deadenylases and is linked to various cellular processes including bulk mRNA degradation, miRNA-mediated repression, translational repression during translational initiation and general transcription regulation. During miRNA-mediated repression the complex also seems to act as translational repressor during translational initiation. Additional complex functions may be a consequence of its influence on mRNA expression. This Gallus gallus (Chicken) protein is CCR4-NOT transcription complex subunit 7 (CNOT7).